The primary structure comprises 342 residues: Fatty acid desaturase 6 (342 aa).

The next 2 helical transmembrane spans lie at 39–59 (GVDC…FLCL) and 63–83 (NILA…TLTV). A Histidine box-1 motif is present at residues 87–91 (HLATH). The chain crosses the membrane as a helical span at residues 100–120 (WSKILMIFFLEVCTAFSAEFA). The short motif at 124-128 (HVNLH) is the Histidine box-2 element. A run of 2 helical transmembrane segments spans residues 151–171 (YVYM…VALE) and 185–205 (LGFI…VSGF). A Histidine box-3 motif is present at residues 277–281 (HVEHH).

The protein belongs to the fatty acid desaturase type 1 family.

Its subcellular location is the membrane. It functions in the pathway lipid metabolism; fatty acid metabolism. The sequence is that of Fatty acid desaturase 6 (Fads6) from Mus musculus (Mouse).